Here is a 485-residue protein sequence, read N- to C-terminus: Glutamyl-tRNA(Gln) amidotransferase subunit A (485 aa).

Catalysis depends on charge relay system residues lysine 76 and serine 151. The active-site Acyl-ester intermediate is the serine 175.

It belongs to the amidase family. GatA subfamily. As to quaternary structure, heterotrimer of A, B and C subunits.

The enzyme catalyses L-glutamyl-tRNA(Gln) + L-glutamine + ATP + H2O = L-glutaminyl-tRNA(Gln) + L-glutamate + ADP + phosphate + H(+). Allows the formation of correctly charged Gln-tRNA(Gln) through the transamidation of misacylated Glu-tRNA(Gln) in organisms which lack glutaminyl-tRNA synthetase. The reaction takes place in the presence of glutamine and ATP through an activated gamma-phospho-Glu-tRNA(Gln). This chain is Glutamyl-tRNA(Gln) amidotransferase subunit A, found in Chlorobium luteolum (strain DSM 273 / BCRC 81028 / 2530) (Pelodictyon luteolum).